We begin with the raw amino-acid sequence, 479 residues long: Tegument protein VP16 homolog (479 aa).

The protein belongs to the herpesviridae tegument protein VP16 protein family. As to quaternary structure, associates with the VP16-induced complex; binding to host HCFC1 activates VP16 for association with the octamer motif-binding host protein POU2F1, to form a multiprotein-DNA complex responsible for activating transcription of the viral immediate early genes.

The protein localises to the virion tegument. It localises to the host nucleus. Its function is as follows. Transcriptional activator of immediate-early (IE) gene products (alpha genes). Acts as a key activator of lytic infection by initiating the lytic program through the assembly of the transcriptional regulatory VP16-induced complex composed of VP16 and two cellular factors, HCFC1 and POU2F1. VP16-induced complex represents a regulatory switch: when it is on, it promotes IE-gene expression and thus lytic infection, and when it is off, it limits IE-gene transcription favoring latent infection. May play a role in the aggregation of tegument proteins around nucleocapsids during virus morphogenesis. The sequence is that of Tegument protein VP16 homolog from Equus caballus (Horse).